Consider the following 494-residue polypeptide: Serine/threonine-protein kinase PBL13 (494 aa).

Cys4 carries the S-palmitoyl cysteine lipid modification. Position 65 is a phosphothreonine (Thr65). Residues 76 to 356 (FSSSNFLGEG…STVVSVLQDI (281 aa)) form the Protein kinase domain. Residues 82-90 (LGEGGFGPV) and Lys111 contribute to the ATP site. Tyr156 is subject to Phosphotyrosine. Asp206 serves as the catalytic Proton acceptor. Phosphoserine is present on Ser210. Ser240 bears the Phosphoserine; by autocatalysis mark. 2 positions are modified to phosphothreonine: Thr241 and Thr246. Position 254 is a phosphotyrosine (Tyr254). A Phosphoserine; by autocatalysis modification is found at Ser321. Residues Thr323 and Thr383 each carry the phosphothreonine; by autocatalysis modification. Residue Ser384 is modified to Phosphoserine; by autocatalysis. Phosphothreonine; by autocatalysis is present on residues Thr395, Thr398, Thr406, Thr413, Thr421, and Thr428. Ser429 carries the phosphoserine; by autocatalysis modification. A disordered region spans residues 434–471 (DKTRREVKETSLQNFDKPRNVSTTDNHQKFRSPAHTAR). Phosphothreonine; by autocatalysis is present on Thr443. Positions 443-458 (TSLQNFDKPRNVSTTD) are enriched in polar residues. 2 positions are modified to phosphoserine; by autocatalysis: Ser444 and Ser455. Thr456 carries the post-translational modification Phosphothreonine; by autocatalysis. Over residues 462–471 (KFRSPAHTAR) the composition is skewed to basic residues. Tyr481 is modified (phosphotyrosine; by autocatalysis).

Belongs to the protein kinase superfamily. Ser/Thr protein kinase family. As to quaternary structure, interacts with RBHOD. Interaction is disrupted by flagellin-induced immune signaling.

It is found in the cell membrane. It carries out the reaction L-seryl-[protein] + ATP = O-phospho-L-seryl-[protein] + ADP + H(+). The enzyme catalyses L-threonyl-[protein] + ATP = O-phospho-L-threonyl-[protein] + ADP + H(+). In terms of biological role, involved in defense responses. Acts as a negative regulator of plant immune responses. This chain is Serine/threonine-protein kinase PBL13, found in Arabidopsis thaliana (Mouse-ear cress).